The sequence spans 182 residues: MPEEPTGSTAPQDRPPRRLRLLLSVAATVLALDIVTKVLAVKLLPPGQPVPIIGDTVTWTLVRNSGAAFSMATGYTWVLTLIATGVVVGIFWMGRRLVSPWWAVGLGMILGGAMGNLVDRFFRAPGPLRGHVVDFLSVGWWPVFNVADPSVVGGAILLVVLSIFGYDFDTVGRRKKADQSRD.

3 helical membrane-spanning segments follow: residues 21 to 41 (LLLSVAATVLALDIVTKVLAV), 74 to 94 (GYTWVLTLIATGVVVGIFWMG), and 98 to 118 (VSPWWAVGLGMILGGAMGNLV). Residues Asp-134 and Asp-148 contribute to the active site. Residues 146-166 (VADPSVVGGAILLVVLSIFGY) traverse the membrane as a helical segment.

Belongs to the peptidase A8 family.

The protein localises to the cell membrane. It catalyses the reaction Release of signal peptides from bacterial membrane prolipoproteins. Hydrolyzes -Xaa-Yaa-Zaa-|-(S,diacylglyceryl)Cys-, in which Xaa is hydrophobic (preferably Leu), and Yaa (Ala or Ser) and Zaa (Gly or Ala) have small, neutral side chains.. The protein operates within protein modification; lipoprotein biosynthesis (signal peptide cleavage). This protein specifically catalyzes the removal of signal peptides from prolipoproteins. This is Lipoprotein signal peptidase from Mycobacterium avium (strain 104).